Here is a 77-residue protein sequence, read N- to C-terminus: MADVLERVTKIIVDRLGVEETEVVPAASFKEDLGADSLDVVELVMQLEDEFEMEISDEDAEKIATVGDAVTYIESHL.

Residues 2 to 77 (ADVLERVTKI…DAVTYIESHL (76 aa)) enclose the Carrier domain. O-(pantetheine 4'-phosphoryl)serine is present on serine 37.

This sequence belongs to the acyl carrier protein (ACP) family. Post-translationally, 4'-phosphopantetheine is transferred from CoA to a specific serine of apo-ACP by AcpS. This modification is essential for activity because fatty acids are bound in thioester linkage to the sulfhydryl of the prosthetic group.

The protein resides in the cytoplasm. The protein operates within lipid metabolism; fatty acid biosynthesis. Carrier of the growing fatty acid chain in fatty acid biosynthesis. The protein is Acyl carrier protein of Bacillus anthracis (strain A0248).